The sequence spans 2542 residues: Talin-2 (2542 aa).

Positions 88-406 (RPQKIRMLDG…GYIDIILKKK (319 aa)) constitute an FERM domain. The interaction with PIP5K1C stretch occupies residues 312 to 406 (GVSFFLVKEK…GYIDIILKKK (95 aa)). Residues S428, S449, S623, and S1023 each carry the phosphoserine modification. Y1665 carries the post-translational modification Phosphotyrosine. T1843 is subject to Phosphothreonine. The 240-residue stretch at 2294-2533 (TEWVDPEDPT…QIRQQQYKFL (240 aa)) folds into the I/LWEQ domain.

In terms of assembly, interacts directly with PIP5K1C.

It localises to the cytoplasm. The protein localises to the cell junction. It is found in the focal adhesion. Its subcellular location is the synapse. The protein resides in the cell membrane. It localises to the cytoskeleton. As a major component of focal adhesion plaques that links integrin to the actin cytoskeleton, may play an important role in cell adhesion. Recruits PIP5K1C to focal adhesion plaques and strongly activates its kinase activity. The chain is Talin-2 (TLN2) from Homo sapiens (Human).